The chain runs to 296 residues: Elongation factor Ts (296 aa).

The segment at 82 to 85 is involved in Mg(2+) ion dislocation from EF-Tu; sequence TDFV.

Belongs to the EF-Ts family.

The protein resides in the cytoplasm. Associates with the EF-Tu.GDP complex and induces the exchange of GDP to GTP. It remains bound to the aminoacyl-tRNA.EF-Tu.GTP complex up to the GTP hydrolysis stage on the ribosome. The protein is Elongation factor Ts of Coxiella burnetii (strain CbuG_Q212) (Coxiella burnetii (strain Q212)).